We begin with the raw amino-acid sequence, 427 residues long: Gamma-glutamyl phosphate reductase (427 aa).

This sequence belongs to the gamma-glutamyl phosphate reductase family.

Its subcellular location is the cytoplasm. The catalysed reaction is L-glutamate 5-semialdehyde + phosphate + NADP(+) = L-glutamyl 5-phosphate + NADPH + H(+). The protein operates within amino-acid biosynthesis; L-proline biosynthesis; L-glutamate 5-semialdehyde from L-glutamate: step 2/2. In terms of biological role, catalyzes the NADPH-dependent reduction of L-glutamate 5-phosphate into L-glutamate 5-semialdehyde and phosphate. The product spontaneously undergoes cyclization to form 1-pyrroline-5-carboxylate. This Gluconobacter oxydans (strain 621H) (Gluconobacter suboxydans) protein is Gamma-glutamyl phosphate reductase.